The following is a 252-amino-acid chain: tRNA (guanine-N(7)-)-methyltransferase (252 aa).

The S-adenosyl-L-methionine site is built by Glu51, Asp76, Asn103, and Asp125. The active site involves Asp125. Residues Lys129, Asp159, and 199–202 contribute to the substrate site; that span reads TYYE.

This sequence belongs to the class I-like SAM-binding methyltransferase superfamily. TrmB family.

It carries out the reaction guanosine(46) in tRNA + S-adenosyl-L-methionine = N(7)-methylguanosine(46) in tRNA + S-adenosyl-L-homocysteine. The protein operates within tRNA modification; N(7)-methylguanine-tRNA biosynthesis. Functionally, catalyzes the formation of N(7)-methylguanine at position 46 (m7G46) in tRNA. The protein is tRNA (guanine-N(7)-)-methyltransferase of Bacteroides thetaiotaomicron (strain ATCC 29148 / DSM 2079 / JCM 5827 / CCUG 10774 / NCTC 10582 / VPI-5482 / E50).